Here is a 563-residue protein sequence, read N- to C-terminus: Arginine--tRNA ligase (563 aa).

The short motif at 120–130 is the 'HIGH' region element; the sequence is PNIAKPFHVGH.

Belongs to the class-I aminoacyl-tRNA synthetase family. In terms of assembly, monomer.

The protein resides in the cytoplasm. The enzyme catalyses tRNA(Arg) + L-arginine + ATP = L-arginyl-tRNA(Arg) + AMP + diphosphate. The sequence is that of Arginine--tRNA ligase from Clostridium acetobutylicum (strain ATCC 824 / DSM 792 / JCM 1419 / IAM 19013 / LMG 5710 / NBRC 13948 / NRRL B-527 / VKM B-1787 / 2291 / W).